A 159-amino-acid polypeptide reads, in one-letter code: 2-C-methyl-D-erythritol 2,4-cyclodiphosphate synthase (159 aa).

A divalent metal cation contacts are provided by D8 and H10. 4-CDP-2-C-methyl-D-erythritol 2-phosphate is bound by residues 8 to 10 (DVH) and 34 to 35 (HS). Position 42 (H42) interacts with a divalent metal cation. 4-CDP-2-C-methyl-D-erythritol 2-phosphate is bound by residues 56 to 58 (DIG), 61 to 65 (FPDTD), 132 to 135 (TTTE), F139, and R142.

Belongs to the IspF family. In terms of assembly, homotrimer. A divalent metal cation serves as cofactor.

The catalysed reaction is 4-CDP-2-C-methyl-D-erythritol 2-phosphate = 2-C-methyl-D-erythritol 2,4-cyclic diphosphate + CMP. It functions in the pathway isoprenoid biosynthesis; isopentenyl diphosphate biosynthesis via DXP pathway; isopentenyl diphosphate from 1-deoxy-D-xylulose 5-phosphate: step 4/6. Its function is as follows. Involved in the biosynthesis of isopentenyl diphosphate (IPP) and dimethylallyl diphosphate (DMAPP), two major building blocks of isoprenoid compounds. Catalyzes the conversion of 4-diphosphocytidyl-2-C-methyl-D-erythritol 2-phosphate (CDP-ME2P) to 2-C-methyl-D-erythritol 2,4-cyclodiphosphate (ME-CPP) with a corresponding release of cytidine 5-monophosphate (CMP). The sequence is that of 2-C-methyl-D-erythritol 2,4-cyclodiphosphate synthase from Finegoldia magna (strain ATCC 29328 / DSM 20472 / WAL 2508) (Peptostreptococcus magnus).